A 130-amino-acid polypeptide reads, in one-letter code: Large ribosomal subunit protein bL17 (130 aa).

The protein belongs to the bacterial ribosomal protein bL17 family. As to quaternary structure, part of the 50S ribosomal subunit. Contacts protein L32.

This chain is Large ribosomal subunit protein bL17, found in Delftia acidovorans (strain DSM 14801 / SPH-1).